Consider the following 147-residue polypeptide: uncharacterized protein (147 aa).

The 104-residue stretch at 44–147 (LVGYIDKEIH…LKSIKERLSI (104 aa)) folds into the HTH LytTR-type domain.

It is found in the cytoplasm. This is an uncharacterized protein from Staphylococcus aureus (strain bovine RF122 / ET3-1).